The chain runs to 626 residues: Division abnormally delayed protein (626 aa).

An N-terminal signal peptide occupies residues 1–26 (MAARSVRLAQLLLFTLLCGFVGLSAA). Over residues 41–52 (LHSATTHHRRRL) the composition is skewed to basic residues. The disordered stretch occupies residues 41–65 (LHSATTHHRRRLQRDSRAKDAVGGS). N-linked (GlcNAc...) asparagine; atypical glycosylation is present at Asn-97. 3 N-linked (GlcNAc...) asparagine glycosylation sites follow: Asn-101, Asn-150, and Asn-187. The tract at residues 533–607 (NSIQATHDIQ…GKTSGSNPLE (75 aa)) is disordered. Ser-549, Ser-569, Ser-573, and Ser-601 each carry an O-linked (Xyl...) (heparan sulfate) serine glycan. Gly residues predominate over residues 565-575 (GAHGSGDGSGD). The GPI-anchor amidated glycine moiety is linked to residue Gly-602. Residues 603 to 626 (SNPLEGTATWMLLTLVTMLFSSCS) constitute a propeptide, removed in mature form.

Belongs to the glypican family. As to quaternary structure, interacts with nord; the interaction promotes dally degradation. Interacts with Magu. As part of the dally/ Magu complex, associates with fwe (isoforms ubi, LoseA and LoseB) and is unable to interact with fwe independently of Magu.

It localises to the cell membrane. Its function is as follows. Cell surface proteoglycan that bears heparan sulfate. Functions as a coreceptor for growth factors and morphogens, such as the products of dpp, to regulate signaling and distribution of these ligands. Required for cell division patterning during postembryonic development of the nervous system. Plays a role in dpp/BMP signaling possibly by stabilizing dpp and thereby creating a morphological gradient during wing development. Might have a role in testis development. Functions with magu and fwe in a mechanism of scaling, which utilises apoptosis to ensure that the dpp patterning gradient remains proportional to the size of the growing wing. In this mechanism, fwe represses dally and Magu-dependent activity in expanding the gradient, and dally/Magu inhibits fwe-dependent apoptosis to keep cell death rate low. When the levels of these different proteins are optimally regulated the gradient correctly scales with organ growth but when this fails, fwe-mediated apoptosis is activated to trim the developing tissue to match the correct size of the gradient. This chain is Division abnormally delayed protein (dally), found in Drosophila melanogaster (Fruit fly).